Here is a 455-residue protein sequence, read N- to C-terminus: MVNLGSYVFVFVALSLTVVVPSVQAHIAEYDEYWTQRQTNALRETLESYDPNPENVTDHFNYHAALAMETTGIVNETRRDLRQVGRGKKTTRRGGRFESLNAIDKCWRGDKNWDKNRKKLADCVLGFGRKTTGGKNGPIYVVTDPSDNDLLKPKPGTIRHAVTRDRPLWIIFARSMIIKLQQELIITNDKTIDGRGAKIYITGGAGLTLQFVRNVIIHNIHIKQIKRGAGGLIIDSEQHFGLRTVSDGDGINIFGATNVWIDHVSMTDCSDGMIDAIMGSTAITISNSHFTDHDEVMLFGGTNKDVIDKKMQITVAFNHFGKRLKQRMPRVRFGLVHVVNNDYTHWEMYAIGGNMNPTIISQGNRFIAPPIEDSKQVTKREYTPYPEWKSWNWQSEKDYFLNGAYFVQSGKANAWSATPKNPIPRKFAIRPQPGTKVRRLTKDAGTLGCKPGKSC.

The first 25 residues, 1 to 25 (MVNLGSYVFVFVALSLTVVVPSVQA), serve as a signal peptide directing secretion. N-linked (GlcNAc...) asparagine glycans are attached at residues Asn55 and Asn75. Residues Asp247, Asp271, and Asp275 each coordinate Ca(2+). Residue Arg327 is part of the active site.

It belongs to the polysaccharide lyase 1 family. It depends on Ca(2+) as a cofactor.

It carries out the reaction Eliminative cleavage of (1-&gt;4)-alpha-D-galacturonan to give oligosaccharides with 4-deoxy-alpha-D-galact-4-enuronosyl groups at their non-reducing ends.. It functions in the pathway glycan metabolism; pectin degradation; 2-dehydro-3-deoxy-D-gluconate from pectin: step 2/5. In Arabidopsis thaliana (Mouse-ear cress), this protein is Probable pectate lyase 6.